Reading from the N-terminus, the 364-residue chain is Mannose-1-phosphate guanyltransferase (364 aa).

The protein belongs to the transferase hexapeptide repeat family.

It is found in the cytoplasm. The enzyme catalyses alpha-D-mannose 1-phosphate + GTP + H(+) = GDP-alpha-D-mannose + diphosphate. It participates in nucleotide-sugar biosynthesis; GDP-alpha-D-mannose biosynthesis; GDP-alpha-D-mannose from alpha-D-mannose 1-phosphate (GTP route): step 1/1. Functionally, involved in cell wall synthesis where it is required for glycosylation. Involved in cell cycle progression through cell-size checkpoint. This Aspergillus oryzae (strain ATCC 42149 / RIB 40) (Yellow koji mold) protein is Mannose-1-phosphate guanyltransferase (mpg1).